We begin with the raw amino-acid sequence, 294 residues long: Protease HtpX (294 aa).

The next 2 membrane-spanning stretches (helical) occupy residues 4–24 and 34–52; these read IALFLLTNLAVMVVFGLVLSL and GLLIMALLFGFGGSIVSLM. A Zn(2+)-binding site is contributed by histidine 139. Glutamate 140 is a catalytic residue. Histidine 143 contributes to the Zn(2+) binding site. 2 helical membrane passes run 158-178 and 194-214; these read VVNTFVIFISRVIAQIAAGFL and LIYFAVATVLELVFGILASII. Glutamate 223 serves as a coordination point for Zn(2+).

It belongs to the peptidase M48B family. Zn(2+) serves as cofactor.

The protein localises to the cell inner membrane. This chain is Protease HtpX, found in Klebsiella pneumoniae subsp. pneumoniae (strain ATCC 700721 / MGH 78578).